The chain runs to 87 residues: RNA-binding protein Hfq (87 aa).

A Sm domain is found at 9 to 68 (DPFLNALRRERIPVSIFLVNGIKLQGKIQSFDQFVILLENTVNQMVYKHAISTVVPARAV).

The protein belongs to the Hfq family. In terms of assembly, homohexamer.

Its function is as follows. RNA chaperone that binds small regulatory RNA (sRNAs) and mRNAs to facilitate mRNA translational regulation in response to envelope stress, environmental stress and changes in metabolite concentrations. Also binds with high specificity to tRNAs. This is RNA-binding protein Hfq from Pseudoalteromonas translucida (strain TAC 125).